A 111-amino-acid chain; its full sequence is Beta-microseminoprotein (111 aa).

The signal sequence occupies residues 1 to 20 (MKFLLGTLVVLATFVTLCNS). Residue Gln-21 is modified to Pyrrolidone carboxylic acid. 5 disulfide bridges follow: Cys-22–Cys-67, Cys-35–Cys-59, Cys-54–Cys-90, Cys-57–Cys-66, and Cys-81–Cys-104.

It belongs to the beta-microseminoprotein family. As to quaternary structure, homodimer; Interacts with PI16. In terms of tissue distribution, corpora lutea, mostly in the luteal cells surrounding blood vessels.

It is found in the secreted. This chain is Beta-microseminoprotein (MSMB), found in Sus scrofa (Pig).